The chain runs to 395 residues: S-adenosylmethionine synthase (395 aa).

An ATP-binding site is contributed by H16. D18 contacts Mg(2+). Position 44 (E44) interacts with K(+). Residues E57 and Q100 each coordinate L-methionine. A flexible loop region spans residues 100-110 (QSPDIAQGVDD). ATP contacts are provided by residues 174–176 (DAK), 241–242 (RF), D250, 256–257 (RK), A273, and K277. L-methionine is bound at residue D250. Residue K281 participates in L-methionine binding.

Belongs to the AdoMet synthase family. Homotetramer; dimer of dimers. Requires Mg(2+) as cofactor. K(+) serves as cofactor.

It localises to the cytoplasm. The catalysed reaction is L-methionine + ATP + H2O = S-adenosyl-L-methionine + phosphate + diphosphate. The protein operates within amino-acid biosynthesis; S-adenosyl-L-methionine biosynthesis; S-adenosyl-L-methionine from L-methionine: step 1/1. Its function is as follows. Catalyzes the formation of S-adenosylmethionine (AdoMet) from methionine and ATP. The overall synthetic reaction is composed of two sequential steps, AdoMet formation and the subsequent tripolyphosphate hydrolysis which occurs prior to release of AdoMet from the enzyme. This is S-adenosylmethionine synthase from Limosilactobacillus reuteri (strain DSM 20016) (Lactobacillus reuteri).